The chain runs to 256 residues: MLKSRIIPCLDVKDGRVVKGVNFVDLTDAGDPVEAAIRYDAAGADELCFLDITASSDDRPILLDVVRRTAEACFMPLTVGGGVRTLDDIRALLLAGADKASIMTAAVANRDFVREAAEKFGSQCVVVAIDAKQVRPGRWEIFTHGGRKPTGLDAVDYAREVVALGAGEILLTSMDRDGAKTGFDIPLTKAVTDAVNVPVIASGGVGTLDHLVEGVRDGGASAVLAASIFHFGEFTIAEAKLHMANCGLRMRLDGIV.

Catalysis depends on residues aspartate 11 and aspartate 130.

It belongs to the HisA/HisF family. Heterodimer of HisH and HisF.

It is found in the cytoplasm. It catalyses the reaction 5-[(5-phospho-1-deoxy-D-ribulos-1-ylimino)methylamino]-1-(5-phospho-beta-D-ribosyl)imidazole-4-carboxamide + L-glutamine = D-erythro-1-(imidazol-4-yl)glycerol 3-phosphate + 5-amino-1-(5-phospho-beta-D-ribosyl)imidazole-4-carboxamide + L-glutamate + H(+). The protein operates within amino-acid biosynthesis; L-histidine biosynthesis; L-histidine from 5-phospho-alpha-D-ribose 1-diphosphate: step 5/9. Its function is as follows. IGPS catalyzes the conversion of PRFAR and glutamine to IGP, AICAR and glutamate. The HisF subunit catalyzes the cyclization activity that produces IGP and AICAR from PRFAR using the ammonia provided by the HisH subunit. This is Imidazole glycerol phosphate synthase subunit HisF from Methylocella silvestris (strain DSM 15510 / CIP 108128 / LMG 27833 / NCIMB 13906 / BL2).